The following is a 638-amino-acid chain: DNA gyrase subunit B (638 aa).

The Toprim domain maps to 423 to 537 (CEVYIVEGDS…KGHVYLAMPP (115 aa)). Mg(2+)-binding residues include Glu429, Asp502, and Asp504.

Belongs to the type II topoisomerase GyrB family. Heterotetramer, composed of two GyrA and two GyrB chains. In the heterotetramer, GyrA contains the active site tyrosine that forms a transient covalent intermediate with DNA, while GyrB binds cofactors and catalyzes ATP hydrolysis. Mg(2+) serves as cofactor. Requires Mn(2+) as cofactor. It depends on Ca(2+) as a cofactor.

Its subcellular location is the cytoplasm. The catalysed reaction is ATP-dependent breakage, passage and rejoining of double-stranded DNA.. Its function is as follows. A type II topoisomerase that negatively supercoils closed circular double-stranded (ds) DNA in an ATP-dependent manner to modulate DNA topology and maintain chromosomes in an underwound state. Negative supercoiling favors strand separation, and DNA replication, transcription, recombination and repair, all of which involve strand separation. Also able to catalyze the interconversion of other topological isomers of dsDNA rings, including catenanes and knotted rings. Type II topoisomerases break and join 2 DNA strands simultaneously in an ATP-dependent manner. The sequence is that of DNA gyrase subunit B from Treponema denticola (strain ATCC 35405 / DSM 14222 / CIP 103919 / JCM 8153 / KCTC 15104).